The following is a 339-amino-acid chain: Phosphate acyltransferase (339 aa).

The protein belongs to the PlsX family. In terms of assembly, homodimer. Probably interacts with PlsY.

The protein localises to the cytoplasm. It carries out the reaction a fatty acyl-[ACP] + phosphate = an acyl phosphate + holo-[ACP]. The protein operates within lipid metabolism; phospholipid metabolism. Its function is as follows. Catalyzes the reversible formation of acyl-phosphate (acyl-PO(4)) from acyl-[acyl-carrier-protein] (acyl-ACP). This enzyme utilizes acyl-ACP as fatty acyl donor, but not acyl-CoA. This Vesicomyosocius okutanii subsp. Calyptogena okutanii (strain HA) protein is Phosphate acyltransferase.